We begin with the raw amino-acid sequence, 230 residues long: Cytochrome c oxidase subunit 2 (230 aa).

Over 1–14 the chain is Mitochondrial intermembrane; that stretch reads MAHPTQLGFKDAAM. The helical transmembrane segment at 15-45 threads the bilayer; that stretch reads PVMEELLHFHDHALMIVLLISTLVLYIITAM. At 46–59 the chain is on the mitochondrial matrix side; sequence VSTKLTNKYILDSQ. The helical transmembrane segment at 60–87 threads the bilayer; the sequence is EIEIVWTILPAVILVLIALPSLRILYLM. Topologically, residues 88–230 are mitochondrial intermembrane; that stretch reads DEINDPHLTI…NWSSLMLEDA (143 aa). Histidine 161, cysteine 196, glutamate 198, cysteine 200, histidine 204, and methionine 207 together coordinate Cu cation. Glutamate 198 provides a ligand contact to Mg(2+).

This sequence belongs to the cytochrome c oxidase subunit 2 family. As to quaternary structure, component of the cytochrome c oxidase (complex IV, CIV), a multisubunit enzyme composed of 14 subunits. The complex is composed of a catalytic core of 3 subunits MT-CO1, MT-CO2 and MT-CO3, encoded in the mitochondrial DNA, and 11 supernumerary subunits COX4I, COX5A, COX5B, COX6A, COX6B, COX6C, COX7A, COX7B, COX7C, COX8 and NDUFA4, which are encoded in the nuclear genome. The complex exists as a monomer or a dimer and forms supercomplexes (SCs) in the inner mitochondrial membrane with NADH-ubiquinone oxidoreductase (complex I, CI) and ubiquinol-cytochrome c oxidoreductase (cytochrome b-c1 complex, complex III, CIII), resulting in different assemblies (supercomplex SCI(1)III(2)IV(1) and megacomplex MCI(2)III(2)IV(2)). Found in a complex with TMEM177, COA6, COX18, COX20, SCO1 and SCO2. Interacts with TMEM177 in a COX20-dependent manner. Interacts with COX20. Interacts with COX16. Cu cation serves as cofactor.

The protein localises to the mitochondrion inner membrane. It carries out the reaction 4 Fe(II)-[cytochrome c] + O2 + 8 H(+)(in) = 4 Fe(III)-[cytochrome c] + 2 H2O + 4 H(+)(out). Component of the cytochrome c oxidase, the last enzyme in the mitochondrial electron transport chain which drives oxidative phosphorylation. The respiratory chain contains 3 multisubunit complexes succinate dehydrogenase (complex II, CII), ubiquinol-cytochrome c oxidoreductase (cytochrome b-c1 complex, complex III, CIII) and cytochrome c oxidase (complex IV, CIV), that cooperate to transfer electrons derived from NADH and succinate to molecular oxygen, creating an electrochemical gradient over the inner membrane that drives transmembrane transport and the ATP synthase. Cytochrome c oxidase is the component of the respiratory chain that catalyzes the reduction of oxygen to water. Electrons originating from reduced cytochrome c in the intermembrane space (IMS) are transferred via the dinuclear copper A center (CU(A)) of subunit 2 and heme A of subunit 1 to the active site in subunit 1, a binuclear center (BNC) formed by heme A3 and copper B (CU(B)). The BNC reduces molecular oxygen to 2 water molecules using 4 electrons from cytochrome c in the IMS and 4 protons from the mitochondrial matrix. This is Cytochrome c oxidase subunit 2 (mt-co2) from Cyprinus carpio (Common carp).